Consider the following 213-residue polypeptide: Imidazole glycerol phosphate synthase subunit HisH (213 aa).

One can recognise a Glutamine amidotransferase type-1 domain in the interval 1–212 (MLAILDYKAG…HRYCTEAADA (212 aa)). Cys-79 serves as the catalytic Nucleophile. Catalysis depends on residues His-187 and Glu-189.

As to quaternary structure, heterodimer of HisH and HisF.

Its subcellular location is the cytoplasm. The enzyme catalyses 5-[(5-phospho-1-deoxy-D-ribulos-1-ylimino)methylamino]-1-(5-phospho-beta-D-ribosyl)imidazole-4-carboxamide + L-glutamine = D-erythro-1-(imidazol-4-yl)glycerol 3-phosphate + 5-amino-1-(5-phospho-beta-D-ribosyl)imidazole-4-carboxamide + L-glutamate + H(+). The catalysed reaction is L-glutamine + H2O = L-glutamate + NH4(+). Its pathway is amino-acid biosynthesis; L-histidine biosynthesis; L-histidine from 5-phospho-alpha-D-ribose 1-diphosphate: step 5/9. Functionally, IGPS catalyzes the conversion of PRFAR and glutamine to IGP, AICAR and glutamate. The HisH subunit catalyzes the hydrolysis of glutamine to glutamate and ammonia as part of the synthesis of IGP and AICAR. The resulting ammonia molecule is channeled to the active site of HisF. This chain is Imidazole glycerol phosphate synthase subunit HisH, found in Nitratidesulfovibrio vulgaris (strain ATCC 29579 / DSM 644 / CCUG 34227 / NCIMB 8303 / VKM B-1760 / Hildenborough) (Desulfovibrio vulgaris).